Consider the following 437-residue polypeptide: MAGGTLYTYPDNWRAYKPLIAAQYSRFPIKVASSPPEFQFGLTNKTPEFLKKFPLGKVPAFEGNNGFCLFESSAIAHYVANDELRGSNNRLHQAQVIQWVGFSDSHVVPPASAWVFPTLGIMQFNKQATEQAKEEIKTVLGVLDCHLQTRTFLVGERITLADITLTCSLLWLYKQVLEPSFRQPYGNVTRWFVTCVNQPEFRAVLGEVKLCDKMAQFDAKKFAEVQPKKETPKKEKPAKEPKKKKKKKKKATPAPAPAPEDDLDESEKALAAEPKSKDPYAHLPKSSFIMDEFKRKYSNEDTLTVALPYFWEHFEKEGWSIWYAEYKFPEELTQTFMSCNLITGMFQRLDKLRKTAFASVILFGTNNNSTISGVWVFRGHDLAFTLSEDWQIDYESYTWRKLESDSEECRTMVKEYFAWEGEFKHVGKAFNQGKIFK.

Residues 2 to 87 form the GST N-terminal domain; the sequence is AGGTLYTYPD…YVANDELRGS (86 aa). The GST C-terminal domain maps to 89 to 222; the sequence is NRLHQAQVIQ…KMAQFDAKKF (134 aa). The segment covering 225–240 has biased composition (basic and acidic residues); that stretch reads VQPKKETPKKEKPAKE. Positions 225-279 are disordered; it reads VQPKKETPKKEKPAKEPKKKKKKKKKATPAPAPAPEDDLDESEKALAAEPKSKDP. Residues 241–251 show a composition bias toward basic residues; that stretch reads PKKKKKKKKKA. The segment covering 266–279 has biased composition (basic and acidic residues); the sequence is SEKALAAEPKSKDP. An EF-1-gamma C-terminal domain is found at 276–437; the sequence is SKDPYAHLPK…KAFNQGKIFK (162 aa).

EF-1 is composed of four subunits: alpha, beta, delta, and gamma.

Probably plays a role in anchoring the complex to other cellular components. This Xenopus laevis (African clawed frog) protein is Elongation factor 1-gamma-B (eef1g-b).